A 966-amino-acid chain; its full sequence is MKIHHFLTLLCTFLPLTTTALTNSTPLSLLGPCYKRCVTKFGETKEQLTNAETISLEYDVSNNTEFSLCKLGCNSHEYTDLNLAAFRYGQLAYQKILTTVEDVPTRGTVLNDVFIVCLDTSFMPSNNSAPSAKRLLSGTVLLVLDEDVAKADNVFLIEVLARNADKSAVQVISQQWCYSSNCNITFNAPTEVSSFDVRLRVSTFDSNGQVGGINFSKWHNINQILTKTFVDMSLKSVVWKAEKAAANFVFNLTASDHVPACSLQMIYRSSLSSELLHRNFYLDHTLEVFVNNLDFDKIYTMQLAPSGTHDRSTPSLASAVIEIPPCRHLVDDYSMCAPPPVSSLSYNWNLSPTSEYELLIKWKLLNYMDGLNVTEELSIPVAYFLLNAHPLITANNEQCEKYEKIRRVVSYGLRELVFHVPDTDCNYEVEMTAVDTNQRISEVKKIQVFRFNVPPYVSFLQASDIPTSVELMAVVLATSAIFALIALFLLYRKRKRDKKARFQMYKDAEAGVSYDYVATTESLGSVVQIRSTNFRFEPVENIDGNIEAALAQQQKFEGGTMNSMFRTYYNLDHPVKVPAHMAEASSDEDNGYENIRYSYFGSELSDDVFEEDIYMTHKSLSIYCQDSPLTTPMAPIAPYEHFDDIPSHQYRNFQVHNFNERIEKQAYWLMATVVDVVRRELYSLKVPKDYTPETISAMRKELEFLRTLAPHGNCRRFEGVVIGRWDDLPRQVIGILIENTRGGTLRNYIAAVGSVFRNCSLATDHDSFASQQDMNSTQHPFDKLSTEADENNSKKVKIQEITDSLSIRFCQFAEQVSSALEHLHSAGSVHTRVTTLNIYLLHNYSDPFDMLPDQVVKLGNFGFAVQNSEDVVLDDNLQPPEVIKGEKYEARGDIWQFGLCLAEMCSLGDLEQSEVGTLKSGHDTFKNLPSTQVLRDAAKRCLSARTRPSASDLCGVFKSVNVAATV.

Positions 1–19 (MKIHHFLTLLCTFLPLTTT) are cleaved as a signal peptide. Over 20-470 (ALTNSTPLSL…QASDIPTSVE (451 aa)) the chain is Extracellular. 6 N-linked (GlcNAc...) asparagine glycosylation sites follow: Asn-62, Asn-126, Asn-183, Asn-214, Asn-251, and Asn-372. The helical transmembrane segment at 471–491 (LMAVVLATSAIFALIALFLLY) threads the bilayer. Residues 492 to 966 (RKRKRDKKAR…FKSVNVAATV (475 aa)) are Cytoplasmic-facing. Positions 656 to 966 (HNFNERIEKQ…FKSVNVAATV (311 aa)) constitute a Protein kinase domain. ATP is bound by residues 662–670 (IEKQAYWLM) and Lys-685.

Belongs to the protein kinase superfamily.

The protein localises to the cell membrane. Functionally, during early embryogenesis, controls asymmetric cell division and the asymmetric localization of P granules of germline precursor P2 and its descendant P3. Probably upstream of tyrosine kinase src-1, plays a role in endoderm development by controlling spindle orientation during EMS blastomere cell division. Controls EMS spindle orientation probably by promoting lin-5 and gpr-1/2 enrichment at, and let-99 exclusion from the junction between P2 and EMS cells. This Caenorhabditis elegans protein is Protein mes-1.